Consider the following 119-residue polypeptide: MIQMNDSKLEVLALGKNIRMSPHKVRKVIDQIRGRSYEEALMLLTFMPYRACDPILKVVCSAAANASHNFGFRKSTLYISEAKVDKGPLFKRFRPRAQGRGFPISKPTCYITIVITSRT.

This sequence belongs to the universal ribosomal protein uL22 family. As to quaternary structure, part of the 50S ribosomal subunit.

It is found in the plastid. It localises to the chloroplast. This protein binds specifically to 23S rRNA. Its function is as follows. The globular domain of the protein is located near the polypeptide exit tunnel on the outside of the subunit, while an extended beta-hairpin is found that lines the wall of the exit tunnel in the center of the 70S ribosome. The chain is Large ribosomal subunit protein uL22c (rpl22) from Spirogyra maxima (Green alga).